A 184-amino-acid polypeptide reads, in one-letter code: Large ribosomal subunit protein uL18 (184 aa).

Belongs to the universal ribosomal protein uL18 family. Part of the 50S ribosomal subunit. Contacts the 5S and 23S rRNAs.

This is one of the proteins that bind and probably mediate the attachment of the 5S RNA into the large ribosomal subunit, where it forms part of the central protuberance. The sequence is that of Large ribosomal subunit protein uL18 from Natronomonas pharaonis (strain ATCC 35678 / DSM 2160 / CIP 103997 / JCM 8858 / NBRC 14720 / NCIMB 2260 / Gabara) (Halobacterium pharaonis).